Here is a 397-residue protein sequence, read N- to C-terminus: Enoyl-[acyl-carrier-protein] reductase [NADH] (397 aa).

Residues 48-53 (GASTGY), 74-75 (FE), 111-112 (DA), and 139-140 (VA) contribute to the NAD(+) site. Tyr-225 lines the substrate pocket. Tyr-235 serves as the catalytic Proton donor. Residues Lys-244 and 273–275 (VVT) contribute to the NAD(+) site.

The protein belongs to the TER reductase family. As to quaternary structure, monomer.

The enzyme catalyses a 2,3-saturated acyl-[ACP] + NAD(+) = a (2E)-enoyl-[ACP] + NADH + H(+). It participates in lipid metabolism; fatty acid biosynthesis. In terms of biological role, involved in the final reduction of the elongation cycle of fatty acid synthesis (FAS II). Catalyzes the reduction of a carbon-carbon double bond in an enoyl moiety that is covalently linked to an acyl carrier protein (ACP). This chain is Enoyl-[acyl-carrier-protein] reductase [NADH], found in Burkholderia pseudomallei (strain 1106a).